We begin with the raw amino-acid sequence, 559 residues long: Amino-acid acetyltransferase, mitochondrial (559 aa).

Positions 162-188 (RLGPKPGSEDPTSELDFTPPETHTLPP) are disordered. The N-acetyltransferase domain maps to 362 to 538 (LPVQVFHSVS…GSAGLSYVED (177 aa)).

The protein belongs to the acetyltransferase family.

Its subcellular location is the mitochondrion. The catalysed reaction is L-glutamate + acetyl-CoA = N-acetyl-L-glutamate + CoA + H(+). It participates in amino-acid biosynthesis; L-arginine biosynthesis; N(2)-acetyl-L-ornithine from L-glutamate: step 1/4. Its function is as follows. N-acetylglutamate synthase involved in arginine biosynthesis. The protein is Amino-acid acetyltransferase, mitochondrial (ARG2) of Laccaria bicolor (strain S238N-H82 / ATCC MYA-4686) (Bicoloured deceiver).